Here is a 939-residue protein sequence, read N- to C-terminus: MKDKIIVKGAKVHNLKNVSLEIPRDKLIVFTGLSGSGKSSLAFDTIYAEGQRRYVESLSSYARQFLGQMDKPDVESIEGLSPAISIDQKTTSRNPRSTVGTVTEIYDYLRLLYARVGVPHCPKCGKEITQQSVDQIVDQIMELPERSKIMILAPIIRGRKGTHEKVLENIKKQGFVRARIDGEIYDLTEDEIKLEKNIKHNIEAVVDRIIVKDGIEGRLTDSIETSLKMAEGLVLVNIIGEEDRLYSEHFACADCGISIDELAPRMFSFNSPFGKCERCDGLGTLMEIDEDLVVPNKDLSIRGGAISTWGDSRMKEESWTYCVLKALMEKYNFDLDTPYKDLPKKVQEVLMYGEPEKLKVTYTKENVTAVYNHSFEGEINNLRRRYMETNSDTMKAEIEKYMSDNPCPKCKGARLKPEALAVTVGGKNIFEFTSMAIREELDFINSINFSEKDKIISSQIIKEIQSRLSFLINVGLDYLDLARKAGTLSGGEAQRIRLATQIGSQLMGVLYILDEPSIGLHQRDNDRLISTLKQLRDVGNTLIVVEHDEDTMREADYIVDIGPGAGEHGGKIVASGTLDEIMSNENSLTGKYLTGAKKVELPEERRKGNGNFITVKGAKENNLKNVTAKFPLGTLTMVTGVSGSGKSTLVNEILYKGLNKIVNKAKDLPGKFKEITGYENIDKIIDIDQSPIGRTPRSNPATYTGTFDIIRELFSQTQEAKMRGYKPGRFSFNVKGGRCEACSGDGIIKIEMQFLSDVYVPCEVCKGKRYNRETLEVKYKGKNIADVLNMTVEEALEFFENIPRIKNKLQTLMDVGLGYIRLGQPSTQLSGGEAQRIKLAYELSKRSTGKTLYILDEPTTGLHIHDVNRLVKILQRLVDGGNTVIVIEHNLDMIKCADYIVDLGPEGGDKGGTIIATGTPEKIAGAKESYTGKYLKKYL.

Residue 32 to 39 coordinates ATP; sequence GLSGSGKS. A C4-type zinc finger spans residues 252-279; sequence CADCGISIDELAPRMFSFNSPFGKCERC. ABC transporter domains follow at residues 309 to 588 and 608 to 936; these read WGDS…ENSL and GNGN…KYLK. 640–647 contributes to the ATP binding site; that stretch reads GVSGSGKS. The C4-type zinc finger occupies 739–765; it reads CEACSGDGIIKIEMQFLSDVYVPCEVC.

This sequence belongs to the ABC transporter superfamily. UvrA family. As to quaternary structure, forms a heterotetramer with UvrB during the search for lesions.

The protein localises to the cytoplasm. The UvrABC repair system catalyzes the recognition and processing of DNA lesions. UvrA is an ATPase and a DNA-binding protein. A damage recognition complex composed of 2 UvrA and 2 UvrB subunits scans DNA for abnormalities. When the presence of a lesion has been verified by UvrB, the UvrA molecules dissociate. The polypeptide is UvrABC system protein A (Clostridium perfringens (strain 13 / Type A)).